Here is a 102-residue protein sequence, read N- to C-terminus: RNA-binding protein Hfq (102 aa).

Positions 9–68 (DPFLNALRRERVPVSIYLVNGIKLQGQIESFDQFVILLKNTVSQMVYKHAISTVVPSRPV) constitute a Sm domain. A disordered region spans residues 63-102 (VPSRPVSHHSNNAGGSTSSNYHHGSSAQNTSAQQDSEENE). Positions 70–96 (HHSNNAGGSTSSNYHHGSSAQNTSAQQ) are enriched in polar residues.

Belongs to the Hfq family. As to quaternary structure, homohexamer.

Its function is as follows. RNA chaperone that binds small regulatory RNA (sRNAs) and mRNAs to facilitate mRNA translational regulation in response to envelope stress, environmental stress and changes in metabolite concentrations. Also binds with high specificity to tRNAs. This chain is RNA-binding protein Hfq, found in Escherichia coli O17:K52:H18 (strain UMN026 / ExPEC).